The following is a 315-amino-acid chain: Olfactory receptor 56A3 (315 aa).

Residues 1 to 29 are Extracellular-facing; the sequence is MTTHRNDTLSTEASDFLLNCFVRSPSWQH. N6 carries an N-linked (GlcNAc...) asparagine glycan. A helical membrane pass occupies residues 30-50; sequence WLSLPLSLLFLLAVGANTTLL. Residues 51 to 58 lie on the Cytoplasmic side of the membrane; sequence MTIWLEAS. The chain crosses the membrane as a helical span at residues 59–79; sequence LHQPLYYLLSLLSLLDIVLCL. Topologically, residues 80-103 are extracellular; it reads TVIPKVLTIFWFDLRPISFPACFL. C101 and C193 are joined by a disulfide. The chain crosses the membrane as a helical span at residues 104-124; that stretch reads QMYIMNCFLAMESCTFMVMAY. At 125-143 the chain is on the cytoplasmic side; that stretch reads DRYVAICHPLRYPSIITDH. A helical membrane pass occupies residues 144–164; it reads FVVKAAMFILTRNVLMTLPIP. Residues 165 to 200 lie on the Extracellular side of the membrane; that stretch reads ILSAQLRYCGRNVIENCICANMSVSRLSCDDVTINH. N185 carries an N-linked (GlcNAc...) asparagine glycan. Residues 201–221 traverse the membrane as a helical segment; that stretch reads LYQFAGGWTLLGSDLILIFLS. Topologically, residues 222 to 241 are cytoplasmic; the sequence is YTFILRAVLRLKAEGAVAKA. A helical membrane pass occupies residues 242–262; the sequence is LSTCGSHFMLILFFSTILLVF. Over 263–277 the chain is Extracellular; that stretch reads VLTHVAKKKVSPDVP. A helical transmembrane segment spans residues 278–298; it reads VLLNVLHHVIPAALNPIIYGV. The Cytoplasmic segment spans residues 299–315; that stretch reads RTQEIKQGMQRLLKKGC.

This sequence belongs to the G-protein coupled receptor 1 family.

It is found in the cell membrane. Its function is as follows. Odorant receptor. The protein is Olfactory receptor 56A3 (OR56A3) of Homo sapiens (Human).